The primary structure comprises 212 residues: Probable GTP-binding protein EngB (212 aa).

The EngB-type G domain occupies 25–199 (FGYEVAFAGR…WAKLDEWMEY (175 aa)). GTP is bound by residues 33-40 (GRSNAGKS), 60-64 (GRTQL), 78-81 (DLPG), 145-148 (TKSD), and 178-180 (FSS). Mg(2+) contacts are provided by Ser40 and Thr62.

This sequence belongs to the TRAFAC class TrmE-Era-EngA-EngB-Septin-like GTPase superfamily. EngB GTPase family. It depends on Mg(2+) as a cofactor.

Functionally, necessary for normal cell division and for the maintenance of normal septation. This chain is Probable GTP-binding protein EngB, found in Hydrogenovibrio crunogenus (strain DSM 25203 / XCL-2) (Thiomicrospira crunogena).